A 176-amino-acid chain; its full sequence is ATP-dependent protease subunit HslV (176 aa).

The active site involves threonine 2. Residues glycine 158, cysteine 161, and threonine 164 each coordinate Na(+).

This sequence belongs to the peptidase T1B family. HslV subfamily. In terms of assembly, a double ring-shaped homohexamer of HslV is capped on each side by a ring-shaped HslU homohexamer. The assembly of the HslU/HslV complex is dependent on binding of ATP.

The protein localises to the cytoplasm. The enzyme catalyses ATP-dependent cleavage of peptide bonds with broad specificity.. Allosterically activated by HslU binding. Its function is as follows. Protease subunit of a proteasome-like degradation complex believed to be a general protein degrading machinery. The chain is ATP-dependent protease subunit HslV from Pasteurella multocida (strain Pm70).